Consider the following 207-residue polypeptide: Large ribosomal subunit protein bL25 (207 aa).

It belongs to the bacterial ribosomal protein bL25 family. CTC subfamily. Part of the 50S ribosomal subunit; part of the 5S rRNA/L5/L18/L25 subcomplex. Contacts the 5S rRNA. Binds to the 5S rRNA independently of L5 and L18.

Functionally, this is one of the proteins that binds to the 5S RNA in the ribosome where it forms part of the central protuberance. The sequence is that of Large ribosomal subunit protein bL25 from Dictyoglomus thermophilum (strain ATCC 35947 / DSM 3960 / H-6-12).